We begin with the raw amino-acid sequence, 150 residues long: MSSFTITVSFLLVLVFQFPGQTRANPVYGSVSNADLMDFKNLLDHLEDKMPLEDEAMPPQVLSEQNEEVGAPLSPLLEVPPWTGEVNPAQRDGGALGRGPWDASDRSALLKSKLRALLAAPRSLRRSSCFGGRMDRIGAQSGLGCNSFRY.

The first 24 residues, 1 to 24 (MSSFTITVSFLLVLVFQFPGQTRA), serve as a signal peptide directing secretion. 2 consecutive propeptides follow at residues 25–122 (NPVY…AAPR) and 92–102 (DGGALGRGPWD). The segment at 77 to 100 (LEVPPWTGEVNPAQRDGGALGRGP) is disordered. Serine 128 carries the phosphoserine modification. The cysteines at positions 129 and 145 are disulfide-linked.

It belongs to the natriuretic peptide family. Homodimer; disulfide-linked antiparallel dimer. Post-translationally, the precursor molecule is proteolytically cleaved by CORIN at Arg-122 to produce the atrial natriuretic peptide. Undergoes further proteolytic cleavage by unknown proteases to give rise to long-acting natriuretic peptide, vessel dilator and kaliuretic peptide. Additional processing gives rise to the auriculin and atriopeptin peptides. In the kidneys, alternative processing by an unknown protease results in the peptide urodilatin. In terms of processing, cleavage by MME initiates degradation of the factor and thereby regulates its activity. Degradation by IDE results in reduced activation of NPR1 (in vitro). During IDE degradation, the resulting products can temporarily stimulate NPR2 to produce cGMP, before the fragments are completely degraded and inactivated by IDE (in vitro). Degraded by IDE. Post-translationally, phosphorylation on Ser-128 decreases vasorelaxant activity. In terms of tissue distribution, brain (at protein level).

The protein resides in the secreted. The protein localises to the perikaryon. It localises to the cell projection. Functionally, hormone that plays a key role in mediating cardio-renal homeostasis, and is involved in vascular remodeling and regulating energy metabolism. Acts by specifically binding and stimulating NPR1 to produce cGMP, which in turn activates effector proteins, such as PRKG1, that drive various biological responses. Regulates vasodilation, natriuresis, diuresis and aldosterone synthesis and is therefore essential for regulating blood pressure, controlling the extracellular fluid volume and maintaining the fluid-electrolyte balance. Also involved in inhibiting cardiac remodeling and cardiac hypertrophy by inducing cardiomyocyte apoptosis and attenuating the growth of cardiomyocytes and fibroblasts. Plays a role in female pregnancy by promoting trophoblast invasion and spiral artery remodeling in uterus, and thus prevents pregnancy-induced hypertension. In adipose tissue, acts in various cGMP- and PKG-dependent pathways to regulate lipid metabolism and energy homeostasis. This includes up-regulating lipid metabolism and mitochondrial oxygen utilization by activating the AMP-activated protein kinase (AMPK), and increasing energy expenditure by acting via MAPK11 to promote the UCP1-dependent thermogenesis of brown adipose tissue. Binds the clearance receptor NPR3 which removes the hormone from circulation. May have a role in cardio-renal homeostasis through regulation of natriuresis, diuresis, vasodilation, and inhibiting aldosterone synthesis. In vitro, promotes the production of cGMP and induces vasodilation. May promote natriuresis, at least in part, by enhancing prostaglandin E2 synthesis resulting in the inhibition of renal Na+-K+-ATPase. However reports on the involvement of this peptide in mammal blood volume and blood pressure homeostasis are conflicting; according to a report, in vivo it is not sufficient to activate cGMP and does not inhibit collecting duct transport nor effect diuresis and natriuresis. Appears to bind to specific receptors that are distinct from the receptors bound by atrial natriuretic peptide and vessel dilator. Possibly enhances protein excretion in urine by decreasing proximal tubular protein reabsorption. Its function is as follows. May have a role in cardio-renal homeostasis through regulation of natriuresis, diuresis, and vasodilation. In vitro, promotes the production of cGMP and induces vasodilation. May promote natriuresis, at least in part, by enhancing prostaglandin E2 synthesis resulting in the inhibition of renal Na+-K+-ATPase. However reports on the involvement of this peptide in mammal blood volume and blood pressure homeostasis are conflicting; according to a report it is not sufficient to activate cGMP and does not inhibit collecting duct transport nor effect diuresis and natriuresis. Appears to bind to specific receptors that are distinct from the receptors bound by the atrial natriuretic and long-acting natriuretic peptides. Possibly functions in protein excretion in urine by maintaining the integrity of the proximal tubules and enhancing protein excretion by decreasing proximal tubular protein reabsorption. In terms of biological role, may have a role in cardio-renal homeostasis through regulation of diuresis and inhibiting aldosterone synthesis. In vitro, promotes the production of cGMP and induces vasodilation. May promote natriuresis, at least in part, by enhancing prostaglandin E2 synthesis resulting in the inhibition of renal Na+-K+-ATPase. May have a role in potassium excretion but not sodium excretion (natriuresis). Possibly enhances protein excretion in urine by decreasing proximal tubular protein reabsorption. Functionally, hormone produced in the kidneys that appears to be important for maintaining cardio-renal homeostasis. Mediates vasodilation, natriuresis and diuresis primarily in the renal system, in order to maintain the extracellular fluid volume and control the fluid-electrolyte balance. Specifically binds and stimulates cGMP production by renal transmembrane receptors, likely NPR1. Urodilatin not ANP, may be the natriuretic peptide responsible for the regulation of sodium and water homeostasis in the kidney. May have a role in cardio-renal homeostasis through regulation of natriuresis and vasodilation. In vivo promotes natriuresis and in vitro, vasodilates renal artery strips. Its function is as follows. May have a role in cardio-renal homeostasis through regulation of regulation of natriuresis and vasodilation. In vivo promotes natriuresis. In vitro, vasodilates intestinal smooth muscle but not smooth muscle strips. In terms of biological role, may have a role in cardio-renal homeostasis through regulation of natriuresis and vasodilation. In vivo promotes natriuresis. In vitro, selectively vasodilates intestinal and vascular smooth muscle strips. Functionally, may have a role in cardio-renal homeostasis through regulation of natriuresis and vasodilation. In vivo promotes natriuresis. In vitro, selectively vasodilates intestinal smooth muscle but not vascular smooth muscle strips. The polypeptide is Natriuretic peptides A (NPPA) (Sus scrofa (Pig)).